The sequence spans 170 residues: Probable phospholipid hydroperoxide glutathione peroxidase (170 aa).

Residue Cys-44 is part of the active site.

This sequence belongs to the glutathione peroxidase family.

The protein resides in the cytoplasm. It carries out the reaction a hydroperoxy polyunsaturated fatty acid + 2 glutathione = a hydroxy polyunsaturated fatty acid + glutathione disulfide + H2O. Its function is as follows. Protects cells and enzymes from oxidative damage, by catalyzing the reduction of hydrogen peroxide, lipid peroxides and organic hydroperoxide, by glutathione. This is Probable phospholipid hydroperoxide glutathione peroxidase (GPXMC1) from Mesembryanthemum crystallinum (Common ice plant).